Consider the following 523-residue polypeptide: MLVELAITLLVIALFIHLRPTPSAKSKSLRHLPNPPSPKPRLPFVGHLHLLDKPLLHNSLIDLSKRYGPLYSLYFGSMPTVVVSTPELFKLFLQTHEASSFNTRFQTPAIRRLTYDNSVAMVPFGPYWKFIRKLIMNDLLNATTVNKLRPLRSQEIRKVLRVMALSAESQVPLNVTEELLKWTNSTISRMMLGEAEEIRDIARDVLKIFGEYSLTDFIWPLKKLKVGQYEKRIDDIFNRFDPVIERVIKKRQEIRKKRKERNGEVEEGEQSVVFLDTLLDFAEDETMEIKITKEQIKGLVVDFFSAGTDSTAVATEWALSELINNPRVLQKAREEVDAVVGKDRLVDEADVQNLPYIRSIVKETFRMHPPLPVVKRKCVQECEIDGYAIPEGALILFNVWAVGRDPKYWDRPTEFRPERFLENVGEGDQAVDLRGQHFQLLPFGSGRRMCPGVNLATAGMATLLASVIQCFDLSVVGPQGKILKGNDAKVSMEESAGLTVPRAHNLVCVPVARSSAVPKLFSS.

Residues 2-22 traverse the membrane as a helical segment; the sequence is LVELAITLLVIALFIHLRPTP. Residue C450 participates in heme binding.

Belongs to the cytochrome P450 family. It depends on heme as a cofactor.

The protein resides in the microsome membrane. The catalysed reaction is (2S)-liquiritigenin + reduced [NADPH--hemoprotein reductase] + O2 = (2R,3S)-2,4',7-trihydroxyisoflavanone + oxidized [NADPH--hemoprotein reductase] + H2O + H(+). It carries out the reaction (2S)-naringenin + reduced [NADPH--hemoprotein reductase] + O2 = 2-hydroxy-2,3-dihydrogenistein + oxidized [NADPH--hemoprotein reductase] + H2O + H(+). Functionally, 2-hydroxyisoflavanone synthase, which catalyzes the hydroxylation associated with 1,2-aryl migration of flavanones. Converts liquiritigenin and naringenin into highly unstable precursors of the isoflavones daidzein and genistein. The polypeptide is 2-hydroxyisoflavanone synthase (CYP93C2) (Glycyrrhiza uralensis (Chinese licorice)).